The primary structure comprises 397 residues: Elongation factor Tu 1 (397 aa).

Residues 10–206 (KPHVNIGTIG…AVDENIPQPE (197 aa)) form the tr-type G domain. Residues 19–26 (GHIDHGKT) are G1. 19–26 (GHIDHGKT) contacts GTP. Threonine 26 provides a ligand contact to Mg(2+). The interval 62–66 (GITIS) is G2. The tract at residues 83–86 (DCPG) is G3. Residues 83 to 87 (DCPGH) and 138 to 141 (NKAD) each bind GTP. Residues 138–141 (NKAD) form a G4 region. The G5 stretch occupies residues 176–178 (SAL).

This sequence belongs to the TRAFAC class translation factor GTPase superfamily. Classic translation factor GTPase family. EF-Tu/EF-1A subfamily. In terms of assembly, monomer.

Its subcellular location is the cytoplasm. The enzyme catalyses GTP + H2O = GDP + phosphate + H(+). Its function is as follows. GTP hydrolase that promotes the GTP-dependent binding of aminoacyl-tRNA to the A-site of ribosomes during protein biosynthesis. The sequence is that of Elongation factor Tu 1 from Streptomyces avermitilis (strain ATCC 31267 / DSM 46492 / JCM 5070 / NBRC 14893 / NCIMB 12804 / NRRL 8165 / MA-4680).